The following is a 357-amino-acid chain: UDP-N-acetylglucosamine--N-acetylmuramyl-(pentapeptide) pyrophosphoryl-undecaprenol N-acetylglucosamine transferase (357 aa).

Residues 11–13 (TGG), Asn120, Arg161, Ser188, and Gln281 each bind UDP-N-acetyl-alpha-D-glucosamine.

Belongs to the glycosyltransferase 28 family. MurG subfamily.

The protein resides in the cell inner membrane. It catalyses the reaction di-trans,octa-cis-undecaprenyl diphospho-N-acetyl-alpha-D-muramoyl-L-alanyl-D-glutamyl-meso-2,6-diaminopimeloyl-D-alanyl-D-alanine + UDP-N-acetyl-alpha-D-glucosamine = di-trans,octa-cis-undecaprenyl diphospho-[N-acetyl-alpha-D-glucosaminyl-(1-&gt;4)]-N-acetyl-alpha-D-muramoyl-L-alanyl-D-glutamyl-meso-2,6-diaminopimeloyl-D-alanyl-D-alanine + UDP + H(+). It participates in cell wall biogenesis; peptidoglycan biosynthesis. Cell wall formation. Catalyzes the transfer of a GlcNAc subunit on undecaprenyl-pyrophosphoryl-MurNAc-pentapeptide (lipid intermediate I) to form undecaprenyl-pyrophosphoryl-MurNAc-(pentapeptide)GlcNAc (lipid intermediate II). This Prochlorococcus marinus (strain SARG / CCMP1375 / SS120) protein is UDP-N-acetylglucosamine--N-acetylmuramyl-(pentapeptide) pyrophosphoryl-undecaprenol N-acetylglucosamine transferase.